Reading from the N-terminus, the 214-residue chain is Peptidyl-tRNA hydrolase (214 aa).

TRNA is bound at residue Tyr-14. His-19 functions as the Proton acceptor in the catalytic mechanism. TRNA is bound by residues Tyr-64, Asn-66, and Asn-113. The segment at Arg-184 to Gly-214 is disordered.

This sequence belongs to the PTH family. As to quaternary structure, monomer.

The protein localises to the cytoplasm. The enzyme catalyses an N-acyl-L-alpha-aminoacyl-tRNA + H2O = an N-acyl-L-amino acid + a tRNA + H(+). In terms of biological role, hydrolyzes ribosome-free peptidyl-tRNAs (with 1 or more amino acids incorporated), which drop off the ribosome during protein synthesis, or as a result of ribosome stalling. Catalyzes the release of premature peptidyl moieties from peptidyl-tRNA molecules trapped in stalled 50S ribosomal subunits, and thus maintains levels of free tRNAs and 50S ribosomes. In Roseiflexus castenholzii (strain DSM 13941 / HLO8), this protein is Peptidyl-tRNA hydrolase.